The sequence spans 232 residues: tRNA (guanine-N(1)-)-methyltransferase (232 aa).

Residues G111 and 131 to 136 (IGDYIL) contribute to the S-adenosyl-L-methionine site.

The protein belongs to the RNA methyltransferase TrmD family. As to quaternary structure, homodimer.

The protein resides in the cytoplasm. It carries out the reaction guanosine(37) in tRNA + S-adenosyl-L-methionine = N(1)-methylguanosine(37) in tRNA + S-adenosyl-L-homocysteine + H(+). In terms of biological role, specifically methylates guanosine-37 in various tRNAs. This Bartonella quintana (strain Toulouse) (Rochalimaea quintana) protein is tRNA (guanine-N(1)-)-methyltransferase.